Consider the following 897-residue polypeptide: Probable basic-leucine zipper transcription factor R (897 aa).

2 disordered regions span residues 38–88 (DDNI…NIET) and 128–198 (YQQR…NSNS). The segment covering 44–75 (NNNNNNNNNNNNNNNNNNNNNNNNNNNNNNNN) has biased composition (low complexity). Polar residues predominate over residues 76 to 88 (IGSPQIMNENIET). Residues 94–137 (QYLERLQSIQQQQHQCQTQIQQQLQNYQQQYEDQYQQRQQQYQD) are a coiled coil. A compositionally biased stretch (low complexity) spans 128–140 (YQQRQQQYQDQYQ). Residues 141–157 (KPYSSPPLNFNSIPPIT) show a composition bias toward polar residues. The span at 158 to 198 (NNNNNNNNNNNNNNNNNNSNSNSNSNSNSNSNSNSNSNSNS) shows a compositional bias: low complexity. 2 coiled-coil regions span residues 228 to 258 (LQQQ…QQQQ) and 330 to 407 (QQLQ…QQQQ). The disordered stretch occupies residues 461–516 (LQLPTPFYSPQQQQQQHTPISSFIPPPSLPSSPPSPPSPPSPPPQQQQQQQQQQQQ). The span at 484–505 (IPPPSLPSSPPSPPSPPSPPPQ) shows a compositional bias: pro residues. The segment covering 506–516 (QQQQQQQQQQQ) has biased composition (low complexity). The region spanning 557–620 (ESKESIKKYN…SIEMMRMEPE (64 aa)) is the bZIP domain. Residues 559–564 (KESIKK) are basic motif. The segment at 569-576 (IASRNYRL) is leucine-zipper.

This sequence belongs to the bZIP family.

The protein localises to the nucleus. In terms of biological role, probable transcriptional regulator. The chain is Probable basic-leucine zipper transcription factor R (bzpR) from Dictyostelium discoideum (Social amoeba).